The chain runs to 67 residues: UPF0434 protein Reut_A0592 (67 aa).

Belongs to the UPF0434 family.

This Cupriavidus pinatubonensis (strain JMP 134 / LMG 1197) (Cupriavidus necator (strain JMP 134)) protein is UPF0434 protein Reut_A0592.